We begin with the raw amino-acid sequence, 356 residues long: ATP-dependent 6-phosphofructokinase (356 aa).

ATP contacts are provided by residues Gly-15, 78-79 (KG), and 115-118 (GEGT). Glu-116 contributes to the Mg(2+) binding site. Substrate is bound by residues 138-140 (TID), Arg-175, 182-184 (MGR), Glu-235, Arg-272, and 278-281 (HLQR). The active-site Proton acceptor is the Asp-140.

Belongs to the phosphofructokinase type A (PFKA) family. Mixed-substrate PFK group III subfamily. In terms of assembly, homodimer or homotetramer. Mg(2+) serves as cofactor.

Its subcellular location is the cytoplasm. The enzyme catalyses beta-D-fructose 6-phosphate + ATP = beta-D-fructose 1,6-bisphosphate + ADP + H(+). It functions in the pathway carbohydrate degradation; glycolysis; D-glyceraldehyde 3-phosphate and glycerone phosphate from D-glucose: step 3/4. In terms of biological role, catalyzes the phosphorylation of D-fructose 6-phosphate to fructose 1,6-bisphosphate by ATP, the first committing step of glycolysis. This Chloroflexus aurantiacus (strain ATCC 29366 / DSM 635 / J-10-fl) protein is ATP-dependent 6-phosphofructokinase.